Here is a 381-residue protein sequence, read N- to C-terminus: Cytochrome b (381 aa).

4 consecutive transmembrane segments (helical) span residues 34–54 (FGSLLGLCLIIQILTGLFLAM), 78–99 (WLIRNIHANGASLFFICVYLHI), 114–134 (WNIGVILLFLLMATAFVGYVL), and 179–199 (FFAFHFLLPFLILALTIIHLL). Residues His84 and His98 each contribute to the heme b site. Heme b contacts are provided by His183 and His197. His202 contacts a ubiquinone. 4 helical membrane-spanning segments follow: residues 227 to 247 (YKDLLGFFVMIFFLTTLALFM), 289 to 309 (LGGVLALLFSIFILMLVPLLH), 321 to 341 (LTQIFFWLLVANSIILTWIGG), and 348 to 368 (FITVGQVASISYFSLFLIIMP).

It belongs to the cytochrome b family. The cytochrome bc1 complex contains 3 respiratory subunits (MT-CYB, CYC1 and UQCRFS1), 2 core proteins (UQCRC1 and UQCRC2) and probably 6 low-molecular weight proteins. Heme b serves as cofactor.

Its subcellular location is the mitochondrion inner membrane. In terms of biological role, component of the ubiquinol-cytochrome c reductase complex (complex III or cytochrome b-c1 complex) that is part of the mitochondrial respiratory chain. The b-c1 complex mediates electron transfer from ubiquinol to cytochrome c. Contributes to the generation of a proton gradient across the mitochondrial membrane that is then used for ATP synthesis. The polypeptide is Cytochrome b (mt-cyb) (Sphyrna tiburo vespertina (Pacific bonnethead shark)).